We begin with the raw amino-acid sequence, 1498 residues long: DNA-directed RNA polymerase subunit beta' (1498 aa).

Positions 67, 69, 82, and 85 each coordinate Zn(2+). Mg(2+)-binding residues include Asp499, Asp501, and Asp503. The Zn(2+) site is built by Cys867, Cys943, Cys950, and Cys953.

The protein belongs to the RNA polymerase beta' chain family. As to quaternary structure, the RNAP catalytic core consists of 2 alpha, 1 beta, 1 beta' and 1 omega subunit. When a sigma factor is associated with the core the holoenzyme is formed, which can initiate transcription. Mg(2+) is required as a cofactor. It depends on Zn(2+) as a cofactor.

The enzyme catalyses RNA(n) + a ribonucleoside 5'-triphosphate = RNA(n+1) + diphosphate. Functionally, DNA-dependent RNA polymerase catalyzes the transcription of DNA into RNA using the four ribonucleoside triphosphates as substrates. The polypeptide is DNA-directed RNA polymerase subunit beta' (Chlorobium phaeobacteroides (strain BS1)).